The primary structure comprises 899 residues: Semaphorin-1A (899 aa).

The span at 1-20 (MLNSHNTNHNNNSASNSNYN) shows a compositional bias: low complexity. The disordered stretch occupies residues 1-24 (MLNSHNTNHNNNSASNSNYNKGHK). Residues 1-40 (MLNSHNTNHNNNSASNSNYNKGHKMHLKSATAKATIMKHK) are Cytoplasmic-facing. A helical transmembrane segment spans residues 41-61 (LSKFYGYGWMQVFLLLTVLVI). Topologically, residues 62-657 (GNQSAWQENI…INAQYTVETL (596 aa)) are extracellular. N-linked (GlcNAc...) asparagine glycans are attached at residues Asn-63, Asn-90, and Asn-117. A Sema domain is found at 74-543 (KLYVELGPED…TDSQVVAIQL (470 aa)). Disulfide bonds link Cys-141-Cys-151 and Cys-169-Cys-178. N-linked (GlcNAc...) asparagine glycosylation is found at Asn-187, Asn-207, and Asn-311. Disulfide bonds link Cys-288-Cys-402 and Cys-312-Cys-361. Asn-404 is a glycosylation site (N-linked (GlcNAc...) asparagine). A helical transmembrane segment spans residues 658-678 (VMAVLAGSIFSLLVGFFTGYF). At 679–899 (CGRRCHKDED…PKNCSYIYRD (221 aa)) the chain is on the cytoplasmic side. 2 disordered regions span residues 735-766 (VLLP…QGPN) and 798-899 (VMGD…IYRD). Positions 809–827 (FSTTRSVKKAVNNTNTRNR) are enriched in polar residues. The segment covering 828 to 837 (SLGRARRQPP) has biased composition (basic residues). Over residues 847–876 (SNSPQQQQQQSQQPHSSSGSSPVMSNSSSS) the composition is skewed to low complexity.

The protein belongs to the semaphorin family. Expressed by subsets of neurons and muscles.

The protein localises to the cell membrane. Involved in growth cone guidance through its role in axonal repulsion. Function in neurons is essential for adult survival, motor neuron survival, and is important for climbing behavior and activity. This is Semaphorin-1A from Drosophila melanogaster (Fruit fly).